Here is a 520-residue protein sequence, read N- to C-terminus: Membrane-bound glycerophospholipid O-acyltransferase 2 (520 aa).

A run of 6 helical transmembrane segments spans residues 22–42 (PIDQVNFVVCQLFALLAAIWF), 61–81 (TLLGLYLALFCFGWYALHFLV), 88–108 (CIMIIIGVENMHNYCFVFALG), 184–204 (FMGILAGPLCSYKDYITFIEG), 237–257 (LLVCGLSLLFHLTICTTLPVE), and 264–284 (FQATASWPTKIIYLYISLLAA). Catalysis depends on residues N342 and H373. The next 3 helical transmembrane spans lie at 366 to 386 (FILSAIWHGVYPGYYLTFLTG), 416 to 436 (VITWIVTQVAISYTVVPFVLL), and 444 to 464 (FYSSWYYCLHILGILVLLLLP).

Belongs to the membrane-bound acyltransferase family. In terms of tissue distribution, expressed in neutrophils.

It localises to the endoplasmic reticulum membrane. The catalysed reaction is a 1-acyl-sn-glycero-3-phosphocholine + an acyl-CoA = a 1,2-diacyl-sn-glycero-3-phosphocholine + CoA. It catalyses the reaction a 1-acyl-sn-glycero-3-phosphoethanolamine + an acyl-CoA = a 1,2-diacyl-sn-glycero-3-phosphoethanolamine + CoA. The enzyme catalyses a 1-acyl-sn-glycero-3-phosphate + an acyl-CoA = a 1,2-diacyl-sn-glycero-3-phosphate + CoA. It carries out the reaction (9Z)-hexadecenoyl-CoA + 1-hexadecanoyl-sn-glycero-3-phosphocholine = 1-hexadecanoyl-2-(9Z-hexadecenoyl)-sn-glycero-3-phosphocholine + CoA. The catalysed reaction is 1-hexadecanoyl-sn-glycero-3-phosphoethanolamine + (9Z)-octadecenoyl-CoA = 1-hexadecanoyl-2-(9Z-octadecenoyl)-sn-glycero-3-phosphoethanolamine + CoA. It catalyses the reaction 1-hexadecanoyl-sn-glycero-3-phosphoethanolamine + (9Z)-hexadecenoyl-CoA = 1-hexadecanoyl-2-(9Z)-hexadecenoyl-sn-glycero-3-phosphoethanolamine + CoA. The enzyme catalyses 1-(9Z-octadecenoyl)-sn-glycero-3-phospho-L-serine + hexadecanoyl-CoA = 1-(9Z)-octadecenoyl-2-hexadecanoyl-sn-glycero-3-phosphoserine + CoA. It carries out the reaction (9Z,12Z)-octadecadienoyl-CoA + 1-hexadecanoyl-sn-glycero-3-phosphocholine = 1-hexadecanoyl-2-(9Z,12Z-octadecadienoyl)-sn-glycero-3-phosphocholine + CoA. The catalysed reaction is 1-hexadecanoyl-sn-glycero-3-phosphocholine + (9Z)-octadecenoyl-CoA = 1-hexadecanoyl-2-(9Z-octadecenoyl)-sn-glycero-3-phosphocholine + CoA. It catalyses the reaction 1-hexadecanoyl-sn-glycero-3-phosphate + (9Z)-hexadecenoyl-CoA = 1-hexadecanoyl-2-[(9Z)-hexadec-9-enoyl]-sn-glycero-3-phosphate + CoA. The enzyme catalyses 1-hexadecanoyl-sn-glycero-3-phosphate + (9Z)-octadecenoyl-CoA = 1-hexadecanoyl-2-(9Z-octadecenoyl)-sn-glycero-3-phosphate + CoA. It carries out the reaction a 1-O-(1Z-alkenyl)-sn-glycero-3-phosphocholine + (9Z)-octadecenoyl-CoA = 1-O-(1Z)-alkenyl-2-(9Z)-octadecenoyl-sn-glycero-3-phosphocholine + CoA. The catalysed reaction is a 1-O-(1Z-alkenyl)-sn-glycero-3-phosphoethanolamine + (9Z)-octadecenoyl-CoA = 1-O-(1Z)-alkenyl-2-(9Z)-octadecenoyl-sn-glycero-3-phosphoethanolamine + CoA. It catalyses the reaction 1-octadecanoyl-sn-glycero-3-phosphoethanolamine + (9Z)-octadecenoyl-CoA = 1-octadecanoyl-2-(9Z-octadecenoyl)-sn-glycero-3-phosphoethanolamine + CoA. The enzyme catalyses 1-octadecanoyl-sn-glycero-3-phosphocholine + (9Z)-octadecenoyl-CoA = 1-octadecanoyl-2-(9Z-octadecenoyl)-sn-glycero-3-phosphocholine + CoA. It carries out the reaction 1-(9Z-octadecenoyl)-sn-glycero-3-phosphoethanolamine + (9Z)-octadecenoyl-CoA = 1,2-di-(9Z-octadecenoyl)-sn-glycero-3-phosphoethanolamine + CoA. It participates in lipid metabolism; phospholipid metabolism. Partially inhibited by thimerosal. Acyltransferase which catalyzes the transfer of an acyl group from an acyl-CoA to a lysophospholipid leading to the production of a phospholipid and participates in the reacylation step of the phospholipid remodeling pathway also known as the Lands cycle. Catalyzes preferentially the acylation of lysophosphatidylethanolamine (1-acyl-sn-glycero-3-phosphoethanolamine or LPE) and lysophosphatidic acid (LPA) and to a lesser extend lysophosphatidylcholine (LPC) and lysophosphatidylserine (LPS). Prefers oleoyl-CoA as the acyl donor. May be involved in chondrocyte differentiation. The polypeptide is Membrane-bound glycerophospholipid O-acyltransferase 2 (Homo sapiens (Human)).